The sequence spans 305 residues: Glycine--tRNA ligase alpha subunit (305 aa).

This sequence belongs to the class-II aminoacyl-tRNA synthetase family. As to quaternary structure, tetramer of two alpha and two beta subunits.

Its subcellular location is the cytoplasm. It catalyses the reaction tRNA(Gly) + glycine + ATP = glycyl-tRNA(Gly) + AMP + diphosphate. The protein is Glycine--tRNA ligase alpha subunit of Streptococcus suis (strain 05ZYH33).